Consider the following 887-residue polypeptide: Lateral signaling target protein 2 homolog (887 aa).

Lys87 participates in a covalent cross-link: Glycyl lysine isopeptide (Lys-Gly) (interchain with G-Cter in ubiquitin). Residues 308 to 327 form a disordered region; the sequence is PALSAPLPPEGPLSAKAKDP. Ser334 carries the phosphoserine modification. 2 disordered regions span residues 354 to 396 and 412 to 474; these read DEMS…GSDE and ALAR…ASLA. Residue Thr516 is modified to Phosphothreonine. At Ser586 the chain carries Phosphoserine; by MAP2K. A disordered region spans residues 599–714; that stretch reads LAKASDRAPE…THAAPQATRE (116 aa). The segment covering 602 to 612 has biased composition (basic and acidic residues); that stretch reads ASDRAPERQEE. Residues 638 to 648 are compositionally biased toward polar residues; sequence TSGSQVDTASG. Low complexity-rich tracts occupy residues 681–693 and 700–711; these read SGSS…SCSS and AAPAATHAAPQA. The segment at 817-879 adopts an FYVE-type zinc-finger fold; the sequence is DEACGFCTAC…THCYMFHVTP (63 aa). The Zn(2+) site is built by Cys823, Cys826, Cys839, Cys842, Cys847, Cys850, and Cys869. Position 870 is a phosphothreonine; by MAP2K (Thr870). Zn(2+) is bound at residue Cys872.

This sequence belongs to the lst-2 family. As to quaternary structure, interacts with TRIM3. Post-translationally, monoubiquitination at Lys-87 prevents binding to phosphatidylinositol 3-phosphate (PI3P) and localization to early endosome membranes.

Its subcellular location is the cytoplasm. The protein localises to the cytosol. The protein resides in the early endosome membrane. Functionally, negative regulator of epidermal growth factor receptor (EGFR) signaling. Acts by promoting EGFR degradation in endosomes when not monoubiquitinated. The sequence is that of Lateral signaling target protein 2 homolog (ZFYVE28) from Homo sapiens (Human).